The chain runs to 148 residues: Small ribosomal subunit protein uS9 (148 aa).

It belongs to the universal ribosomal protein uS9 family.

In Aedes aegypti (Yellowfever mosquito), this protein is Small ribosomal subunit protein uS9 (RpS16).